Here is a 522-residue protein sequence, read N- to C-terminus: Probable cytochrome P450 12e1, mitochondrial (522 aa).

C468 is a heme binding site.

It belongs to the cytochrome P450 family. Heme serves as cofactor.

The protein resides in the mitochondrion membrane. The polypeptide is Probable cytochrome P450 12e1, mitochondrial (Cyp12e1) (Drosophila melanogaster (Fruit fly)).